A 244-amino-acid chain; its full sequence is UPF0173 metal-dependent hydrolase RoseRS_3945 (244 aa).

Belongs to the UPF0173 family.

In Roseiflexus sp. (strain RS-1), this protein is UPF0173 metal-dependent hydrolase RoseRS_3945.